The following is a 307-amino-acid chain: UDP-3-O-acyl-N-acetylglucosamine deacetylase (307 aa).

Residues His80, His239, and Asp243 each contribute to the Zn(2+) site. The active-site Proton donor is His266.

The protein belongs to the LpxC family. It depends on Zn(2+) as a cofactor.

The catalysed reaction is a UDP-3-O-[(3R)-3-hydroxyacyl]-N-acetyl-alpha-D-glucosamine + H2O = a UDP-3-O-[(3R)-3-hydroxyacyl]-alpha-D-glucosamine + acetate. It functions in the pathway glycolipid biosynthesis; lipid IV(A) biosynthesis; lipid IV(A) from (3R)-3-hydroxytetradecanoyl-[acyl-carrier-protein] and UDP-N-acetyl-alpha-D-glucosamine: step 2/6. Catalyzes the hydrolysis of UDP-3-O-myristoyl-N-acetylglucosamine to form UDP-3-O-myristoylglucosamine and acetate, the committed step in lipid A biosynthesis. This chain is UDP-3-O-acyl-N-acetylglucosamine deacetylase, found in Neisseria meningitidis serogroup A / serotype 4A (strain DSM 15465 / Z2491).